We begin with the raw amino-acid sequence, 335 residues long: Phosphatidylcholine-sterol acyltransferase (335 aa).

Positions 1–18 are cleaved as a signal peptide; the sequence is MKKWFVCLLGLVALTVQA. The active-site Nucleophile is the serine 34. Active-site residues include aspartate 306 and histidine 309.

Belongs to the 'GDSL' lipolytic enzyme family.

The enzyme catalyses a sterol + a 1,2-diacyl-sn-glycero-3-phosphocholine = a sterol ester + a 1-acyl-sn-glycero-3-phosphocholine. In terms of biological role, fatty acid transfer between phosphatidylcholine and cholesterol. This is Phosphatidylcholine-sterol acyltransferase from Aeromonas hydrophila.